Consider the following 339-residue polypeptide: Phosphate acyltransferase (339 aa).

The protein belongs to the PlsX family. As to quaternary structure, homodimer. Probably interacts with PlsY.

The protein localises to the cytoplasm. It carries out the reaction a fatty acyl-[ACP] + phosphate = an acyl phosphate + holo-[ACP]. It participates in lipid metabolism; phospholipid metabolism. Catalyzes the reversible formation of acyl-phosphate (acyl-PO(4)) from acyl-[acyl-carrier-protein] (acyl-ACP). This enzyme utilizes acyl-ACP as fatty acyl donor, but not acyl-CoA. The polypeptide is Phosphate acyltransferase (Helicobacter pylori (strain J99 / ATCC 700824) (Campylobacter pylori J99)).